The following is a 341-amino-acid chain: Ribulose-5-phosphate reductase (341 aa).

Zn(2+) contacts are provided by C38, H64, E65, and E144.

This sequence belongs to the zinc-containing alcohol dehydrogenase family. It depends on Zn(2+) as a cofactor.

It catalyses the reaction D-ribitol 5-phosphate + NADP(+) = D-ribulose 5-phosphate + NADPH + H(+). Its pathway is cell wall biogenesis; poly(ribitol phosphate) teichoic acid biosynthesis. In terms of biological role, catalyzes the NADPH dependent reduction of D-ribulose 5-phosphate to D-ribitol 5-phosphate. This is Ribulose-5-phosphate reductase from Bacillus spizizenii (strain ATCC 23059 / NRRL B-14472 / W23) (Bacillus subtilis subsp. spizizenii).